The sequence spans 156 residues: Cyclic pyranopterin monophosphate synthase (156 aa).

Substrate is bound by residues 73–75 (LCH) and 110–111 (ME). D125 is a catalytic residue.

It belongs to the MoaC family. In terms of assembly, homohexamer; trimer of dimers.

It catalyses the reaction (8S)-3',8-cyclo-7,8-dihydroguanosine 5'-triphosphate = cyclic pyranopterin phosphate + diphosphate. Its pathway is cofactor biosynthesis; molybdopterin biosynthesis. Its function is as follows. Catalyzes the conversion of (8S)-3',8-cyclo-7,8-dihydroguanosine 5'-triphosphate to cyclic pyranopterin monophosphate (cPMP). This is Cyclic pyranopterin monophosphate synthase from Pseudomonas putida (strain W619).